The following is a 190-amino-acid chain: Potassium-transporting ATPase KdpC subunit (190 aa).

A helical transmembrane segment spans residues 10–30 (TFIFLLLITGGVYPLLTTVLG).

Belongs to the KdpC family. The system is composed of three essential subunits: KdpA, KdpB and KdpC.

The protein localises to the cell inner membrane. Part of the high-affinity ATP-driven potassium transport (or Kdp) system, which catalyzes the hydrolysis of ATP coupled with the electrogenic transport of potassium into the cytoplasm. This subunit acts as a catalytic chaperone that increases the ATP-binding affinity of the ATP-hydrolyzing subunit KdpB by the formation of a transient KdpB/KdpC/ATP ternary complex. The chain is Potassium-transporting ATPase KdpC subunit from Escherichia coli (strain K12 / MC4100 / BW2952).